A 1863-amino-acid polypeptide reads, in one-letter code: Transient receptor potential cation channel subfamily M member 7 (1863 aa).

N-acetylmethionine is present on M1. Residues 1 to 850 lie on the Cytoplasmic side of the membrane; that stretch reads MSQKSWIEST…ITRKFYAFYH (850 aa). S101 bears the Phosphoserine mark. The span at 544–555 shows a compositional bias: low complexity; the sequence is NRRSGRNTSSST. The interval 544 to 574 is disordered; it reads NRRSGRNTSSSTPQLRKSHETFGNRADKKEK. The segment covering 560–573 has biased composition (basic and acidic residues); that stretch reads KSHETFGNRADKKE. Residues 851–876 form a helical membrane-spanning segment; sequence APIVKFWFNTLAYLGFLMLYTFVVLV. Topologically, residues 877–882 are extracellular; the sequence is KMEQLP. Residues 883–904 form a helical membrane-spanning segment; that stretch reads SVQEWIVIAYIFTYAIEKVREV. The Cytoplasmic segment spans residues 905–923; the sequence is FMSEAGKISQKIKVWFSDY. A helical membrane pass occupies residues 924 to 943; it reads FNVSDTIAIISFFVGFGLRF. Over 944-956 the chain is Extracellular; that stretch reads GAKWNYINAYDNH. The chain crosses the membrane as a helical span at residues 957–980; the sequence is VFVAGRLIYCLNIIFWYVRLLDFL. Residues 981 to 999 lie on the Cytoplasmic side of the membrane; sequence AVNQQAGPYVMMIGKMVAN. The chain crosses the membrane as a helical span at residues 1000 to 1023; the sequence is MFYIVVIMALVLLSFGVPRKAILY. Over 1024-1025 the chain is Extracellular; the sequence is PH. Positions 1026–1066 form an intramembrane region, pore-forming; sequence EEPSWSLAKDIVFHPYWMIFGEVYAYEIDVCANDSTLPTIC. The Extracellular portion of the chain corresponds to 1067 to 1069; that stretch reads GPG. The helical transmembrane segment at 1070–1098 threads the bilayer; that stretch reads TWLTPFLQAVYLFVQYIIMVNLLIAFFNN. At 1099–1863 the chain is on the cytoplasmic side; it reads VYLQVKAISN…EATNSVRLML (765 aa). 3 S-palmitoyl cysteine lipidation sites follow: C1143, C1144, and C1146. At T1163 the chain carries Phosphothreonine. 5 positions are modified to phosphoserine: S1191, S1193, S1224, S1255, and S1258. The stretch at 1198-1250 forms a coiled coil; that stretch reads RVTFERVEQMSIQIKEVGDRVNYIKRSLQSLDSQIGHLQDLSALTVDTLKTLT. Residue T1265 is modified to Phosphothreonine. Phosphoserine occurs at positions 1300, 1357, 1360, 1385, 1386, 1389, 1394, 1395, and 1403. The segment at 1380 to 1418 is disordered; it reads NQKLGSSPNSSPHMSSPPTKFSVSTPSQPSCKSHLESTT. The segment covering 1385–1397 has biased composition (low complexity); the sequence is SSPNSSPHMSSPP. The span at 1398-1410 shows a compositional bias: polar residues; it reads TKFSVSTPSQPSC. A Phosphothreonine modification is found at T1404. Residues S1406 and S1445 each carry the phosphoserine modification. T1454 carries the phosphothreonine modification. At S1455 the chain carries Phosphoserine. 2 positions are modified to phosphothreonine: T1466 and T1470. Phosphoserine occurs at positions 1491, 1498, 1502, 1511, 1525, and 1531. A disordered region spans residues 1498–1539; it reads SRRASTEDSPEVDSKAALLPDWLRDRPSNREMPSEGGTLNGL. A compositionally biased stretch (basic and acidic residues) spans 1519 to 1530; the sequence is WLRDRPSNREMP. T1535 bears the Phosphothreonine mark. S1541 is subject to Phosphoserine. A Phosphothreonine modification is found at T1549. 2 positions are modified to phosphoserine: S1565 and S1567. A Phosphothreonine modification is found at T1581. One can recognise an Alpha-type protein kinase domain in the interval 1592 to 1822; that stretch reads ILNNSMSSWS…CCRKLKLPDL (231 aa). S1596 and S1613 each carry phosphoserine. Positions 1619, 1620, 1621, 1622, and 1646 each coordinate ADP. S1658 is subject to Phosphoserine. Residue T1683 is modified to Phosphothreonine. E1718, E1719, and M1721 together coordinate ADP. Position 1751 (H1751) interacts with Zn(2+). D1765 (proton acceptor) is an active-site residue. D1775 is an ADP binding site. S1777 is subject to Phosphoserine. 3 residues coordinate Zn(2+): H1808, C1810, and C1814. At T1828 the chain carries Phosphothreonine. Residues 1838-1863 are disordered; that stretch reads ESSDLNLQSGNSTKESEATNSVRLML. Residues 1841-1863 show a composition bias toward polar residues; it reads DLNLQSGNSTKESEATNSVRLML. 3 positions are modified to phosphoserine: S1846, S1849, and S1858.

In the C-terminal section; belongs to the protein kinase superfamily. Alpha-type protein kinase family. ALPK subfamily. This sequence in the N-terminal section; belongs to the transient receptor (TC 1.A.4) family. LTrpC subfamily. TRPM7 sub-subfamily. Homodimer. Homotetramer. Forms heteromers with TRPM6; heteromeric channels are functionally different from the homomeric channels. Interacts with PLCB1. The cofactor is Zn(2+). In terms of processing, palmitoylated; palmitoylation at Cys-1143, Cys-1144 and Cys-1146 promotes TRPM7 trafficking from the Golgi to the surface membrane. Post-translationally, autophosphorylated; autophosphorylation regulates TRPM7 kinase activity towards its substrates. The C-terminal kinase domain can be cleaved from the channel segment in a cell-type-specific fashion. TRPM7 is cleaved by caspase-8, dissociating the kinase from the ion-conducting pore. The cleaved kinase fragments (M7CKs) can translocate to the cell nucleus and binds chromatin-remodeling complex proteins in a Zn(2+)-dependent manner to ultimately phosphorylate specific Ser/Thr residues of histones. As to expression, found to be expressed in brain and skeletal muscle, with stronger signals in kidney, heart, liver and spleen.

Its subcellular location is the cell membrane. The protein localises to the cytoplasmic vesicle membrane. It is found in the nucleus. It carries out the reaction L-seryl-[protein] + ATP = O-phospho-L-seryl-[protein] + ADP + H(+). The catalysed reaction is L-threonyl-[protein] + ATP = O-phospho-L-threonyl-[protein] + ADP + H(+). The enzyme catalyses Mg(2+)(in) = Mg(2+)(out). It catalyses the reaction Ca(2+)(in) = Ca(2+)(out). It carries out the reaction Zn(2+)(in) = Zn(2+)(out). Channel displays constitutive activity. Channel activity is negatively regulated by cytosolic Mg(2+), Mg-ATP and low intracellular pH. Resting free cytosolic Mg(2+) and Mg-ATP concentrations seem to be sufficient to block native TRPM7 channel activity. TRPM7 channel activity is highly dependent on membrane levels of phosphatidylinositol 4,5 bisphosphate (PIP2). PIP2 hydrolysis negatively regulates TRPM7 channel activity. TRPM7 kinase activity does not affect channel activity. The kinase activity is controlled through the autophosphorylation of a serine/threonine-rich region located N-terminal to the catalytic domain. Bifunctional protein that combines an ion channel with an intrinsic kinase domain, enabling it to modulate cellular functions either by conducting ions through the pore or by phosphorylating downstream proteins via its kinase domain. The channel is highly permeable to divalent cations, specifically calcium (Ca2+), magnesium (Mg2+) and zinc (Zn2+) and mediates their influx. Controls a wide range of biological processes such as Ca2(+), Mg(2+) and Zn(2+) homeostasis, vesicular Zn(2+) release channel and intracellular Ca(2+) signaling, embryonic development, immune responses, cell motility, proliferation and differentiation. The C-terminal alpha-kinase domain autophosphorylates cytoplasmic residues of TRPM7. TRPM7 phosphorylates SMAD2, suggesting that TRPM7 kinase may play a role in activating SMAD signaling pathways. In vitro, TRPM7 kinase phosphorylates ANXA1 (annexin A1), myosin II isoforms and a variety of proteins with diverse cellular functions. Functionally, the cleaved channel exhibits substantially higher current and potentiates Fas receptor signaling. Its function is as follows. The C-terminal kinase domain can be cleaved from the channel segment in a cell-type-specific fashion. In immune cells, the TRPM7 kinase domain is clipped from the channel domain by caspases in response to Fas-receptor stimulation. The cleaved kinase fragments can translocate to the nucleus, and bind chromatin-remodeling complex proteins in a Zn(2+)-dependent manner to ultimately phosphorylate specific Ser/Thr residues of histones known to be functionally important for cell differentiation and embryonic development. This is Transient receptor potential cation channel subfamily M member 7 (Trpm7) from Mus musculus (Mouse).